A 1134-amino-acid polypeptide reads, in one-letter code: DNA damage-binding protein 1 (1134 aa).

It belongs to the DDB1 family. In terms of assembly, interacts with cdt-1 and cul-4. Expressed at high levels in the spermatheca of adult hermaphrodites.

Its subcellular location is the cytoplasm. It localises to the nucleus. It functions in the pathway protein modification; protein ubiquitination. Plays a role in DNA repair. May be a component of an E3 ubiquitin-protein ligase which promotes histone ubiquitination in response to UV irradiation. Histone ubiquitination may be important for subsequent DNA repair. Promotes the degradation of the replication licensing factor cdt-1 during S-phase, thereby preventing rereplication of DNA during a single round of cell division. The chain is DNA damage-binding protein 1 (ddb-1) from Caenorhabditis elegans.